The sequence spans 370 residues: Dual-specificity RNA methyltransferase RlmN (370 aa).

Residue Glu-97 is the Proton acceptor of the active site. The Radical SAM core domain maps to Glu-103–Asp-340. Residues Cys-110 and Cys-345 are joined by a disulfide bond. 3 residues coordinate [4Fe-4S] cluster: Cys-117, Cys-121, and Cys-124. S-adenosyl-L-methionine is bound by residues Gly-170–Glu-171, Ser-202, Ser-224–His-226, and Asn-302. Residue Cys-345 is the S-methylcysteine intermediate of the active site.

Belongs to the radical SAM superfamily. RlmN family. The cofactor is [4Fe-4S] cluster.

Its subcellular location is the cytoplasm. It carries out the reaction adenosine(2503) in 23S rRNA + 2 reduced [2Fe-2S]-[ferredoxin] + 2 S-adenosyl-L-methionine = 2-methyladenosine(2503) in 23S rRNA + 5'-deoxyadenosine + L-methionine + 2 oxidized [2Fe-2S]-[ferredoxin] + S-adenosyl-L-homocysteine. It catalyses the reaction adenosine(37) in tRNA + 2 reduced [2Fe-2S]-[ferredoxin] + 2 S-adenosyl-L-methionine = 2-methyladenosine(37) in tRNA + 5'-deoxyadenosine + L-methionine + 2 oxidized [2Fe-2S]-[ferredoxin] + S-adenosyl-L-homocysteine. In terms of biological role, specifically methylates position 2 of adenine 2503 in 23S rRNA and position 2 of adenine 37 in tRNAs. m2A2503 modification seems to play a crucial role in the proofreading step occurring at the peptidyl transferase center and thus would serve to optimize ribosomal fidelity. The chain is Dual-specificity RNA methyltransferase RlmN from Hydrogenovibrio crunogenus (strain DSM 25203 / XCL-2) (Thiomicrospira crunogena).